The following is a 342-amino-acid chain: HTH-type transcriptional regulator GbpR (342 aa).

Residues 16-73 form the HTH lysR-type domain; that stretch reads LKLRHLQLFVALDEHRNLHRAAASLTMSQPAASKLLGDLEESLGVTLFERHGRGVEPN. The segment at residues 33 to 52 is a DNA-binding region (H-T-H motif); it reads LHRAAASLTMSQPAASKLLG.

It belongs to the LysR transcriptional regulatory family.

Does not seem to be required for sbpA expression. This Azospirillum brasilense protein is HTH-type transcriptional regulator GbpR (gbpR).